The chain runs to 1400 residues: MKDLLNFLKAQHKTEEFDAIKIGLSSPDMIRSWSFGEVKKPETINYRTFKPERDGLFCARIFGPVKDYECLCGKYKRLKHRGVICEKCGVEVTQTKVRRDRMGHIELASPVAHIWFLKSLPSRIGLLMDIPLRDIERVLYFEMYVVTEPGMTDLEKSQMLTEEEYLDRLEEWGDEFTAKMGAEAIKDLLGSMDMHAEAEQMREELETTNSETKRKKVTKRLKLVEAFIQSGNNPEWMILTVLPVLPPDLRPLVPLDGGRFATSDLNDLYRRVINRNNRLKRLLELAAPDIIVRNEKRMLQESVDALLDNGRRGRAITGSNKRPLKSLADMIKGKQGRFRQNLLGKRVDYSGRSVITVGPYLRLHQCGLPKKMALELFKPFIYSKLETRGLATTIKAAKKMVEREEAVVWDILDEVIREHPVLLNRAPTLHRLGIQAFEPVLIEGKAIQLHPLVCAAYNADFDGDQMAVHVPLTLEAQLEARTLMMSTNNILSPASGDPIIVPSQDVVLGLYYMTRDKINVKGEGMYLSGPAEAEKAYRTKQAELHARVKVRITETVVDEDGNSTTETKMVDTTIGRAMLWQIVPAGLPYSIVNQKLGKKQISNLLNEAYRKLGLKDTVIFADQIMYTGFAYAALSGVSVGIDDMVVPPAKYTEIAEAEEEVREIQEQYQSGLVTAGERYNKVIDIWASTNDRVAKAMMANLSSETVVNRDGEEEQQESFNSIYMMADSGARGSAAQIRQLAGMRGLMARPDGSIIETPITANFKEGLNVLQYFISTHGARKGLADTALKTANSGYLTRRLVDVAQDVVVTEHDCGTHEGVDMMPHIEGGDVKVALTELALGRVVAEDVLKPGTEDVLIPRNTLIDEKWCQIMEENSVDSMKVRSVVTCDSDFGCCAQCYGRDLARGHLVNQGEAVGVIAAQSIGEPGTQLTMRTFHIGGAASTAAAENSIQAKTTGTVKLHNAKFVVNKDKKLVITSRASELTIIDEFGRTKEKHKLPYGSMLSKGDNDAVTAGEVVANWEAHTMPIITEVAGRIQFVDMIDGVTVSRQTDDLTGLSSSEVTDPAARPAAGKDMRPAIKLVDEQGNDVMIPGTEMPAHYFLPGKAIVNIEDGAEVGIGDTLSRIPQKSGGNKDITGGLPRVADLFEARKPKEPAILAEHTGTVSFGKETKGKRRLVITRDSGVTYEEMIPKHRQLNVFEGERVERGDVIADGPESPHDILRLRGVHAVTQYIANEVQEVYRLQGVKINDKHIETIVRQMLRKCTITHAGDSEFLPGEQVEYSQVKIANRNLEAEGKEPARFERELLGITKASLATESFISAASFQETTRVLTEAAVSGKRDDLRGLKENVIVGRLIPAGTGFAYHQDRQAKRAEAQEGPSAEQATDNLAALLNAGFSSDE.

Zn(2+)-binding residues include C70, C72, C85, and C88. Residues D460, D462, and D464 each contribute to the Mg(2+) site. Zn(2+) contacts are provided by C814, C888, C895, and C898. Residues 1367-1400 (DRQAKRAEAQEGPSAEQATDNLAALLNAGFSSDE) are disordered.

Belongs to the RNA polymerase beta' chain family. As to quaternary structure, the RNAP catalytic core consists of 2 alpha, 1 beta, 1 beta' and 1 omega subunit. When a sigma factor is associated with the core the holoenzyme is formed, which can initiate transcription. Mg(2+) serves as cofactor. It depends on Zn(2+) as a cofactor.

It carries out the reaction RNA(n) + a ribonucleoside 5'-triphosphate = RNA(n+1) + diphosphate. In terms of biological role, DNA-dependent RNA polymerase catalyzes the transcription of DNA into RNA using the four ribonucleoside triphosphates as substrates. In Vibrio campbellii (strain ATCC BAA-1116), this protein is DNA-directed RNA polymerase subunit beta'.